Consider the following 254-residue polypeptide: uncharacterized protein (254 aa).

It belongs to the methyltransferase superfamily.

This is an uncharacterized protein from Mycobacterium tuberculosis (strain ATCC 25177 / H37Ra).